The following is a 418-amino-acid chain: Serine hydroxymethyltransferase (418 aa).

(6S)-5,6,7,8-tetrahydrofolate contacts are provided by residues Leu-121 and 125–127 (GHL). Lys-230 carries the post-translational modification N6-(pyridoxal phosphate)lysine. 356–358 (SPF) provides a ligand contact to (6S)-5,6,7,8-tetrahydrofolate.

The protein belongs to the SHMT family. In terms of assembly, homodimer. Requires pyridoxal 5'-phosphate as cofactor.

It is found in the cytoplasm. It carries out the reaction (6R)-5,10-methylene-5,6,7,8-tetrahydrofolate + glycine + H2O = (6S)-5,6,7,8-tetrahydrofolate + L-serine. It functions in the pathway one-carbon metabolism; tetrahydrofolate interconversion. It participates in amino-acid biosynthesis; glycine biosynthesis; glycine from L-serine: step 1/1. Catalyzes the reversible interconversion of serine and glycine with tetrahydrofolate (THF) serving as the one-carbon carrier. This reaction serves as the major source of one-carbon groups required for the biosynthesis of purines, thymidylate, methionine, and other important biomolecules. Also exhibits THF-independent aldolase activity toward beta-hydroxyamino acids, producing glycine and aldehydes, via a retro-aldol mechanism. In Shewanella pealeana (strain ATCC 700345 / ANG-SQ1), this protein is Serine hydroxymethyltransferase.